We begin with the raw amino-acid sequence, 305 residues long: UDP-N-acetylenolpyruvoylglucosamine reductase (305 aa).

The region spanning valine 35–histidine 214 is the FAD-binding PCMH-type domain. Arginine 179 is an active-site residue. Serine 228 acts as the Proton donor in catalysis. The active site involves glutamate 298.

Belongs to the MurB family. Requires FAD as cofactor.

The protein resides in the cytoplasm. It carries out the reaction UDP-N-acetyl-alpha-D-muramate + NADP(+) = UDP-N-acetyl-3-O-(1-carboxyvinyl)-alpha-D-glucosamine + NADPH + H(+). Its pathway is cell wall biogenesis; peptidoglycan biosynthesis. Functionally, cell wall formation. This chain is UDP-N-acetylenolpyruvoylglucosamine reductase, found in Nitrobacter winogradskyi (strain ATCC 25391 / DSM 10237 / CIP 104748 / NCIMB 11846 / Nb-255).